The sequence spans 358 residues: Mannonate dehydratase (358 aa).

It belongs to the mannonate dehydratase family. The cofactor is Fe(2+). Mn(2+) is required as a cofactor.

It catalyses the reaction D-mannonate = 2-dehydro-3-deoxy-D-gluconate + H2O. It functions in the pathway carbohydrate metabolism; pentose and glucuronate interconversion. Catalyzes the dehydration of D-mannonate. In Lactococcus lactis subsp. lactis (strain IL1403) (Streptococcus lactis), this protein is Mannonate dehydratase.